A 179-amino-acid polypeptide reads, in one-letter code: Small ribosomal subunit protein uS5c (179 aa).

An S5 DRBM domain is found at 26-89; sequence FVERLIKISR…TDGRKNLIDV (64 aa).

This sequence belongs to the universal ribosomal protein uS5 family. In terms of assembly, part of the 30S ribosomal subunit. Contacts protein S4.

Its subcellular location is the plastid. It localises to the chloroplast. With S4 and S12 plays an important role in translational accuracy. This chain is Small ribosomal subunit protein uS5c (rps5), found in Thalassiosira pseudonana (Marine diatom).